A 271-amino-acid chain; its full sequence is 3-methyl-2-oxobutanoate hydroxymethyltransferase (271 aa).

The Mg(2+) site is built by D51 and D90. 3-methyl-2-oxobutanoate-binding positions include 51–52 (DS), D90, and K119. A Mg(2+)-binding site is contributed by E121. E188 functions as the Proton acceptor in the catalytic mechanism.

This sequence belongs to the PanB family. Homodecamer; pentamer of dimers. The cofactor is Mg(2+).

It localises to the cytoplasm. It carries out the reaction 3-methyl-2-oxobutanoate + (6R)-5,10-methylene-5,6,7,8-tetrahydrofolate + H2O = 2-dehydropantoate + (6S)-5,6,7,8-tetrahydrofolate. The protein operates within cofactor biosynthesis; (R)-pantothenate biosynthesis; (R)-pantoate from 3-methyl-2-oxobutanoate: step 1/2. Functionally, catalyzes the reversible reaction in which hydroxymethyl group from 5,10-methylenetetrahydrofolate is transferred onto alpha-ketoisovalerate to form ketopantoate. The chain is 3-methyl-2-oxobutanoate hydroxymethyltransferase from Aromatoleum aromaticum (strain DSM 19018 / LMG 30748 / EbN1) (Azoarcus sp. (strain EbN1)).